We begin with the raw amino-acid sequence, 100 residues long: Small ribosomal subunit protein uS14c (100 aa).

It belongs to the universal ribosomal protein uS14 family. Part of the 30S ribosomal subunit.

It localises to the plastid. Its function is as follows. Binds 16S rRNA, required for the assembly of 30S particles. The polypeptide is Small ribosomal subunit protein uS14c (Epifagus virginiana (Beechdrops)).